Here is a 463-residue protein sequence, read N- to C-terminus: MAFQWPRFPLQPWRHVTGHLRLPGDKSISNRSLLLGALAEGVTEVTGLLDSDDARAMLNALRDLGVVIEGPHQGRCTVHGVGLHGLKAPPGPLFLGNAGTAMRPLSAALALQPFDTTLTGDPRMSERPINRLVDALREMGAVIEYLAQEGYPPLTIRGGGSVSSQFLTALLMTAPMASAQIKSGLLLSKPYIDITLNVMPFGVPTRDHTERIFAVSAIRYPSPAVLRLEGDATSASYFLAAAGIKGVPVTGIGRHSMQGDSWFPRALRRMGARSCGSSMIVCPRGELRAAVRSDSNSIPDAAMTLATXXALARGGRRPRTIFAWRVKETDRLYAMSTELGAAGARVVPGAGLRGCPLRGRSYYVARCRRDSRMAMCFSLPAHGGRAVRHPGSRLHRQDAELSSKVVRSVPEVWGMAITALRCPSGGALRAMARFESMTGQRGDVVSQLPLLGAARRHAGTFGG.

3 residues coordinate 3-phosphoshikimate: lysine 26, serine 27, and arginine 31. Lysine 26 lines the phosphoenolpyruvate pocket. Residues glycine 99 and arginine 127 each coordinate phosphoenolpyruvate. Residues serine 163, serine 164, glutamine 165, serine 188, aspartate 300, and lysine 327 each contribute to the 3-phosphoshikimate site. Position 165 (glutamine 165) interacts with phosphoenolpyruvate. The Proton acceptor role is filled by aspartate 300. Positions 331 and 372 each coordinate phosphoenolpyruvate.

The protein belongs to the EPSP synthase family. In terms of assembly, monomer.

It is found in the cytoplasm. It catalyses the reaction 3-phosphoshikimate + phosphoenolpyruvate = 5-O-(1-carboxyvinyl)-3-phosphoshikimate + phosphate. It functions in the pathway metabolic intermediate biosynthesis; chorismate biosynthesis; chorismate from D-erythrose 4-phosphate and phosphoenolpyruvate: step 6/7. In terms of biological role, catalyzes the transfer of the enolpyruvyl moiety of phosphoenolpyruvate (PEP) to the 5-hydroxyl of shikimate-3-phosphate (S3P) to produce enolpyruvyl shikimate-3-phosphate and inorganic phosphate. This chain is 3-phosphoshikimate 1-carboxyvinyltransferase, found in Burkholderia pseudomallei (Pseudomonas pseudomallei).